We begin with the raw amino-acid sequence, 1102 residues long: Probable DNA-directed RNA polymerase (1102 aa).

Catalysis depends on residues Asp-734, Lys-804, and Asp-980.

Belongs to the phage and mitochondrial RNA polymerase family.

Its subcellular location is the mitochondrion. The enzyme catalyses RNA(n) + a ribonucleoside 5'-triphosphate = RNA(n+1) + diphosphate. In terms of biological role, DNA-dependent RNA polymerase catalyzes the transcription of DNA into RNA using the four ribonucleoside triphosphates as substrates. The sequence is that of Probable DNA-directed RNA polymerase from Agaricus bitorquis (Pavement mushroom).